The sequence spans 192 residues: 7-methyl-GTP pyrophosphatase (192 aa).

The active-site Proton acceptor is D70.

Belongs to the Maf family. YceF subfamily. The cofactor is a divalent metal cation.

It is found in the cytoplasm. It carries out the reaction N(7)-methyl-GTP + H2O = N(7)-methyl-GMP + diphosphate + H(+). Nucleoside triphosphate pyrophosphatase that hydrolyzes 7-methyl-GTP (m(7)GTP). May have a dual role in cell division arrest and in preventing the incorporation of modified nucleotides into cellular nucleic acids. In Xanthomonas campestris pv. campestris (strain 8004), this protein is 7-methyl-GTP pyrophosphatase.